The following is a 36-amino-acid chain: Alpha-amylase inhibitor AI-3688 (36 aa).

An intrachain disulfide couples C9 to C25.

Inhibits mammalian alpha-amylases specifically but has no action on plant and microbial alpha-amylases. In Kitasatospora aureofaciens (Streptomyces aureofaciens), this protein is Alpha-amylase inhibitor AI-3688.